The following is a 272-amino-acid chain: Sulfur carrier protein FdhD (272 aa).

Catalysis depends on Cys-114, which acts as the Cysteine persulfide intermediate.

The protein belongs to the FdhD family.

It is found in the cytoplasm. Required for formate dehydrogenase (FDH) activity. Acts as a sulfur carrier protein that transfers sulfur from IscS to the molybdenum cofactor prior to its insertion into FDH. The protein is Sulfur carrier protein FdhD of Mycolicibacterium paratuberculosis (strain ATCC BAA-968 / K-10) (Mycobacterium paratuberculosis).